A 272-amino-acid chain; its full sequence is Putative MgpC-like protein MPN_102 (272 aa).

It belongs to the MgpC family.

In Mycoplasma pneumoniae (strain ATCC 29342 / M129 / Subtype 1) (Mycoplasmoides pneumoniae), this protein is Putative MgpC-like protein MPN_102.